The sequence spans 781 residues: Putative UPF0313 protein YPO0674/y3502/YP_2990 (781 aa).

In terms of domain architecture, Radical SAM core spans 368–646 (AYDMIRFSIN…KALLRYHDPA (279 aa)). Positions 382, 386, and 389 each coordinate [4Fe-4S] cluster. Residues 681 to 781 (REARRALRHH…AGSRGKNRQH (101 aa)) are disordered. The segment covering 696-708 (KHTSITRQRQPSN) has biased composition (polar residues). Over residues 726-750 (TSSAHSTSANQSTSANQSTSAAHST) the composition is skewed to low complexity.

The protein belongs to the UPF0313 family. The cofactor is [4Fe-4S] cluster.

This chain is Putative UPF0313 protein YPO0674/y3502/YP_2990, found in Yersinia pestis.